We begin with the raw amino-acid sequence, 332 residues long: D-galactose/methyl-galactoside binding periplasmic protein MglB (332 aa).

An N-terminal signal peptide occupies residues 1–23; the sequence is MNKKVLTLSAVMASLLFGAHAHA. Beta-D-galactose-binding residues include aspartate 37 and asparagine 114. Residues aspartate 37 and asparagine 114 each contribute to the beta-D-glucose site. Positions 157, 159, 161, 163, and 165 each coordinate Ca(2+). Histidine 175, aspartate 177, and arginine 181 together coordinate beta-D-galactose. Beta-D-glucose is bound by residues histidine 175, aspartate 177, and arginine 181. Glutamate 228 is a Ca(2+) binding site. Residues asparagine 234, aspartate 259, and asparagine 279 each contribute to the beta-D-galactose site. Beta-D-glucose-binding residues include asparagine 234, aspartate 259, and asparagine 279.

Belongs to the bacterial solute-binding protein 2 family. The ABC transporter complex is composed of one ATP-binding protein (MglA), two transmembrane proteins (MglC) and a solute-binding protein (MglB).

It localises to the periplasm. Part of the ABC transporter complex MglABC involved in galactose/methyl galactoside import. In addition, binds D-galactose and D-glucose and plays a role in the chemotaxis towards these two sugars by interacting with the Trg chemoreceptor. The chain is D-galactose/methyl-galactoside binding periplasmic protein MglB (mglB) from Salmonella typhimurium (strain LT2 / SGSC1412 / ATCC 700720).